The following is a 77-amino-acid chain: Large ribosomal subunit protein eL14 (77 aa).

Belongs to the eukaryotic ribosomal protein eL14 family.

This Methanococcus maripaludis (strain C6 / ATCC BAA-1332) protein is Large ribosomal subunit protein eL14.